Consider the following 718-residue polypeptide: Polyribonucleotide nucleotidyltransferase (718 aa).

Residues D506 and D512 each contribute to the Mg(2+) site. In terms of domain architecture, KH spans 572–632 (PKLELFSVDP…EQIKAAKDYI (61 aa)). The S1 motif domain occupies 657–718 (GQEFQGIVKK…NGKISVDLCE (62 aa)).

This sequence belongs to the polyribonucleotide nucleotidyltransferase family. Mg(2+) is required as a cofactor.

It is found in the cytoplasm. It catalyses the reaction RNA(n+1) + phosphate = RNA(n) + a ribonucleoside 5'-diphosphate. Its function is as follows. Involved in mRNA degradation. Catalyzes the phosphorolysis of single-stranded polyribonucleotides processively in the 3'- to 5'-direction. This Campylobacter jejuni subsp. doylei (strain ATCC BAA-1458 / RM4099 / 269.97) protein is Polyribonucleotide nucleotidyltransferase.